We begin with the raw amino-acid sequence, 477 residues long: Probable cytosolic Fe-S cluster assembly factor CG17683 (477 aa).

The [4Fe-4S] cluster site is built by Cys23, Cys68, Cys71, Cys74, Cys187, Cys243, Cys395, and Cys399.

It belongs to the NARF family.

In terms of biological role, component of the cytosolic iron-sulfur (Fe/S) protein assembly machinery. Required for maturation of extramitochondrial Fe/S proteins. The protein is Probable cytosolic Fe-S cluster assembly factor CG17683 of Drosophila melanogaster (Fruit fly).